The chain runs to 124 residues: MPTINQLVRKGRLKLSCKKKVPALGKSNPQRRGVCTKVYTTTPRKPNSALRKVARVRISGYGEVTAYIPGEGHNLQEHSVVLIRGGRVKDLPGVRYHIIRGALDLRGVQNRKKARSKYGVKKSS.

Asp90 is subject to 3-methylthioaspartic acid.

It belongs to the universal ribosomal protein uS12 family. Part of the 30S ribosomal subunit. Contacts proteins S8 and S17. May interact with IF1 in the 30S initiation complex.

With S4 and S5 plays an important role in translational accuracy. Functionally, interacts with and stabilizes bases of the 16S rRNA that are involved in tRNA selection in the A site and with the mRNA backbone. Located at the interface of the 30S and 50S subunits, it traverses the body of the 30S subunit contacting proteins on the other side and probably holding the rRNA structure together. The combined cluster of proteins S8, S12 and S17 appears to hold together the shoulder and platform of the 30S subunit. This chain is Small ribosomal subunit protein uS12, found in Wolbachia sp. subsp. Brugia malayi (strain TRS).